The chain runs to 684 residues: Sec1 family domain-containing protein 2 (684 aa).

It belongs to the STXBP/unc-18/SEC1 family.

May be involved in protein transport. This Homo sapiens (Human) protein is Sec1 family domain-containing protein 2 (SCFD2).